The sequence spans 929 residues: DNA mismatch repair protein MutS (929 aa).

The tract at residues 22-46 is disordered; that stretch reads PAAPRSTGSAAAPPPSPAVLDDRSG. Positions 23-32 are enriched in low complexity; the sequence is AAPRSTGSAA. 678–685 contacts ATP; sequence GPNMAGKS.

It belongs to the DNA mismatch repair MutS family.

Its function is as follows. This protein is involved in the repair of mismatches in DNA. It is possible that it carries out the mismatch recognition step. This protein has a weak ATPase activity. In Rhodospirillum rubrum (strain ATCC 11170 / ATH 1.1.1 / DSM 467 / LMG 4362 / NCIMB 8255 / S1), this protein is DNA mismatch repair protein MutS.